A 141-amino-acid chain; its full sequence is Large ribosomal subunit protein uL11c (141 aa).

Belongs to the universal ribosomal protein uL11 family. In terms of assembly, part of the ribosomal stalk of the 50S ribosomal subunit. Interacts with L10 and the large rRNA to form the base of the stalk. L10 forms an elongated spine to which L12 dimers bind in a sequential fashion forming a multimeric L10(L12)X complex.

Its subcellular location is the plastid. It is found in the chloroplast. Forms part of the ribosomal stalk which helps the ribosome interact with GTP-bound translation factors. The polypeptide is Large ribosomal subunit protein uL11c (Trieres chinensis (Marine centric diatom)).